A 203-amino-acid chain; its full sequence is Dephospho-CoA kinase (203 aa).

The DPCK domain occupies 3 to 201 (SVGLTGGIGS…QRYLECAAAA (199 aa)). Position 11–16 (11–16 (GSGKTT)) interacts with ATP.

This sequence belongs to the CoaE family.

It is found in the cytoplasm. It catalyses the reaction 3'-dephospho-CoA + ATP = ADP + CoA + H(+). It functions in the pathway cofactor biosynthesis; coenzyme A biosynthesis; CoA from (R)-pantothenate: step 5/5. Catalyzes the phosphorylation of the 3'-hydroxyl group of dephosphocoenzyme A to form coenzyme A. The chain is Dephospho-CoA kinase from Burkholderia pseudomallei (strain 1710b).